Reading from the N-terminus, the 116-residue chain is Ribosome-binding factor A (116 aa).

It belongs to the RbfA family. As to quaternary structure, monomer. Binds 30S ribosomal subunits, but not 50S ribosomal subunits or 70S ribosomes.

It localises to the cytoplasm. Functionally, one of several proteins that assist in the late maturation steps of the functional core of the 30S ribosomal subunit. Associates with free 30S ribosomal subunits (but not with 30S subunits that are part of 70S ribosomes or polysomes). Required for efficient processing of 16S rRNA. May interact with the 5'-terminal helix region of 16S rRNA. The sequence is that of Ribosome-binding factor A from Levilactobacillus brevis (strain ATCC 367 / BCRC 12310 / CIP 105137 / JCM 1170 / LMG 11437 / NCIMB 947 / NCTC 947) (Lactobacillus brevis).